The primary structure comprises 450 residues: Phosphoglucosamine mutase (450 aa).

S101 acts as the Phosphoserine intermediate in catalysis. 4 residues coordinate Mg(2+): S101, D240, D242, and D244. S101 bears the Phosphoserine mark.

It belongs to the phosphohexose mutase family. It depends on Mg(2+) as a cofactor. In terms of processing, activated by phosphorylation.

The catalysed reaction is alpha-D-glucosamine 1-phosphate = D-glucosamine 6-phosphate. Functionally, catalyzes the conversion of glucosamine-6-phosphate to glucosamine-1-phosphate. The protein is Phosphoglucosamine mutase of Streptococcus equi subsp. zooepidemicus (strain MGCS10565).